A 107-amino-acid polypeptide reads, in one-letter code: Ig kappa chain V-VI region XRPC 24 (107 aa).

A framework-1 region spans residues 1-23 (EIVLTQSPAITAASLGQKVTITC). The cysteines at positions 23 and 87 are disulfide-linked. Residues 24–33 (SASSSVSYMH) are complementarity-determining-1. The framework-2 stretch occupies residues 34 to 48 (WYQQKSGTSPKPWIY). The segment at 49–55 (EISKLAS) is complementarity-determining-2. A framework-3 region spans residues 56–87 (GVPARFSGSGSGTSYSLTISSMEAEDAAIYYC). The interval 88 to 96 (QQWNYPLIT) is complementarity-determining-3. The tract at residues 97–106 (FGSGTKLEIK) is framework-4.

This Mus musculus (Mouse) protein is Ig kappa chain V-VI region XRPC 24.